Reading from the N-terminus, the 351-residue chain is DNA nickase (351 aa).

Residues His-241, Glu-245, and His-303 each contribute to the Fe cation site.

Functionally, acts as a DNA nickase. This is DNA nickase from Nostoc sp. (strain PCC 7120 / SAG 25.82 / UTEX 2576).